Here is a 380-residue protein sequence, read N- to C-terminus: Erythronate-4-phosphate dehydrogenase (380 aa).

The substrate site is built by Ser45 and Thr66. NAD(+) contacts are provided by residues 126–127, Asp146, Thr175, 206–208, and Asp232; these read QV and ASR. The active site involves Arg208. Glu237 is an active-site residue. Residue His254 is the Proton donor of the active site. NAD(+) is bound at residue Gly257. Tyr258 provides a ligand contact to substrate.

It belongs to the D-isomer specific 2-hydroxyacid dehydrogenase family. PdxB subfamily. Homodimer.

It localises to the cytoplasm. The catalysed reaction is 4-phospho-D-erythronate + NAD(+) = (R)-3-hydroxy-2-oxo-4-phosphooxybutanoate + NADH + H(+). The protein operates within cofactor biosynthesis; pyridoxine 5'-phosphate biosynthesis; pyridoxine 5'-phosphate from D-erythrose 4-phosphate: step 2/5. In terms of biological role, catalyzes the oxidation of erythronate-4-phosphate to 3-hydroxy-2-oxo-4-phosphonooxybutanoate. The polypeptide is Erythronate-4-phosphate dehydrogenase (Pseudomonas aeruginosa (strain UCBPP-PA14)).